The primary structure comprises 589 residues: 2-succinyl-5-enolpyruvyl-6-hydroxy-3-cyclohexene-1-carboxylate synthase (589 aa).

This sequence belongs to the TPP enzyme family. MenD subfamily. As to quaternary structure, homodimer. It depends on Mg(2+) as a cofactor. Mn(2+) is required as a cofactor. Thiamine diphosphate serves as cofactor.

The enzyme catalyses isochorismate + 2-oxoglutarate + H(+) = 5-enolpyruvoyl-6-hydroxy-2-succinyl-cyclohex-3-ene-1-carboxylate + CO2. It functions in the pathway quinol/quinone metabolism; 1,4-dihydroxy-2-naphthoate biosynthesis; 1,4-dihydroxy-2-naphthoate from chorismate: step 2/7. Its pathway is quinol/quinone metabolism; menaquinone biosynthesis. In terms of biological role, catalyzes the thiamine diphosphate-dependent decarboxylation of 2-oxoglutarate and the subsequent addition of the resulting succinic semialdehyde-thiamine pyrophosphate anion to isochorismate to yield 2-succinyl-5-enolpyruvyl-6-hydroxy-3-cyclohexene-1-carboxylate (SEPHCHC). This chain is 2-succinyl-5-enolpyruvyl-6-hydroxy-3-cyclohexene-1-carboxylate synthase, found in Myxococcus xanthus (strain DK1622).